The primary structure comprises 394 residues: G2/mitotic-specific cyclin-B2 (394 aa).

Belongs to the cyclin family. Cyclin AB subfamily. In terms of assembly, interacts with the CDK1 protein kinase to form a serine/threonine kinase holoenzyme complex also known as maturation promoting factor (MPF). The cyclin subunit imparts substrate specificity to the complex.

Functionally, essential for the control of the cell cycle at the G2/M (mitosis) transition. The protein is G2/mitotic-specific cyclin-B2 (ccnb2) of Anguilla japonica (Japanese eel).